The chain runs to 842 residues: Homeobox-leucine zipper protein REVOLUTA (842 aa).

The disordered stretch occupies residues Met1 to Leu20. A compositionally biased stretch (basic and acidic residues) spans Asn7 to Leu20. Positions Ser22–Lys85 form a DNA-binding region, homeobox. Positions Leu90 to Glu121 form a coiled coil. Residues Asp151–Val379 form the START domain.

Belongs to the HD-ZIP homeobox family. Class III subfamily. In terms of assembly, homodimer. Heterodimer with ZPR1, ZPR2, ZPR3 or ZPR4. Interacts with ESR1 and ESR2. Interacts with ZPR1, ZPR2, ZPR3 and ZPR4. Heterodimerization with ZPR3 prevents DNA binding by REV. In terms of tissue distribution, expressed in the interfascicular regions of stem and vascular bundles of young roots and leaves.

Its subcellular location is the nucleus. Functionally, probable transcription factor involved in the regulation of interfascicular fiber (cortical cells) and secondary xylem differentiation in the inflorescence stems. Required for lateral shoot meristems (LSMs) and flower meristems (FMs) initiation. May be involved in the determination of vascular patterning and organ polarity. Directly regulates the expression of AGO10, ZPR1, ZPR2, ZPR3 and ZPR4. Required to regulate adaxial-abaxial polarity and leaf axial patterning. The chain is Homeobox-leucine zipper protein REVOLUTA from Arabidopsis thaliana (Mouse-ear cress).